The sequence spans 188 residues: Protein K (188 aa).

The polypeptide is Protein K (K) (Escherichia coli).